The sequence spans 81 residues: MAEISTDIAAMSFEEALAELDLIVRRLEEGKGRLDDSIVAYERGALLKKHCEAKLEEARTKVERIVSGPDGSVALQAVDNV.

It belongs to the XseB family. Heterooligomer composed of large and small subunits.

The protein localises to the cytoplasm. The catalysed reaction is Exonucleolytic cleavage in either 5'- to 3'- or 3'- to 5'-direction to yield nucleoside 5'-phosphates.. In terms of biological role, bidirectionally degrades single-stranded DNA into large acid-insoluble oligonucleotides, which are then degraded further into small acid-soluble oligonucleotides. In Paramagnetospirillum magneticum (strain ATCC 700264 / AMB-1) (Magnetospirillum magneticum), this protein is Exodeoxyribonuclease 7 small subunit.